Here is a 1192-residue protein sequence, read N- to C-terminus: DNA topoisomerase 2 (1192 aa).

ATP is bound by residues Asn-64, Asn-95, and Gly-142 to Lys-149. Residues Glu-438, Asp-539, and Asp-541 each coordinate Mg(2+). The Topo IIA-type catalytic domain maps to Ile-707 to Ile-1174. The active-site O-(5'-phospho-DNA)-tyrosine intermediate is Tyr-800.

The protein belongs to the type II topoisomerase family. Mg(2+) serves as cofactor. It depends on Mn(2+) as a cofactor. Ca(2+) is required as a cofactor.

Its subcellular location is the host cytoplasm. It catalyses the reaction ATP-dependent breakage, passage and rejoining of double-stranded DNA.. Its function is as follows. Type II topoisomerase. Processively relaxes supercoiled DNA. Displays DNA-supercoiling activity only when associated with the viral histone-like protein. This African swine fever virus (isolate Tick/South Africa/Pretoriuskop Pr4/1996) (ASFV) protein is DNA topoisomerase 2.